The following is a 210-amino-acid chain: Protein HEADING DATE REPRESSOR 1 (210 aa).

The segment at 1–97 (MEEPASADPP…GKRSSAEMLL (97 aa)) is disordered. Positions 29–49 (QQELNKEAADEQLNNQAHEEA) form a coiled coil. Composition is skewed to basic and acidic residues over residues 45–54 (AHEEAMKIDD) and 62–79 (DDVH…RKAL). The stretch at 129 to 184 (RRIAIQEMNRKDREINGLNEQLEEDSRVLELLQKQLADERKKRTEIEKENSMLHEQ) forms a coiled coil.

As to quaternary structure, interacts with OSK3 and OSK4. Mostly expressed in leaves, seedlings and floral organs, and, to a lower extent, in panicle, roots, nodes, internodes, leaf joint and sheath.

It is found in the nucleus. In terms of biological role, regulates flowering time via a photoperiod-dependent pathway. Suppressor of flowering that upregulates HD1 and down-regulates EHD1 in long days (LD), thus leading to the down-regulation of HD3A and RFT1. Triggers OSK4-mediated HD1 phosphorylation. This chain is Protein HEADING DATE REPRESSOR 1, found in Oryza sativa subsp. japonica (Rice).